The following is a 276-amino-acid chain: MHPAAEHSPLGKSSEYIATYTPSLLFPIPRTAKWAELGLTAETLPYKGVDFWNCFELSWLLPSGKPVVAIGEFSIPADSPNIIESKSFKLYLNSLNQTPFADTASLEATLVKDLSAAAGKPVGVRVRSLKDVEAEGVVALPGVCIDDLDISVSDYEHPRPELLRCDDSRVVEESVHSHLLKSNCPVTSQPDWGSVVVEYRGAALDHASLLEYIVSFRQHSDFHEQCVERIFLDLQRLLKPEKLTVFARYVRRGGLDINPYRSTESVQLPNHRLVRQ.

83 to 85 (IES) is a binding site for substrate. NADPH is bound at residue 85 to 86 (SK). The active-site Thioimide intermediate is the Cys-184. Asp-191 (proton donor) is an active-site residue. 223 to 224 (HE) contributes to the substrate binding site. 252–253 (RG) is an NADPH binding site.

This sequence belongs to the GTP cyclohydrolase I family. QueF type 2 subfamily. Homodimer.

It is found in the cytoplasm. It catalyses the reaction 7-aminomethyl-7-carbaguanine + 2 NADP(+) = 7-cyano-7-deazaguanine + 2 NADPH + 3 H(+). It functions in the pathway tRNA modification; tRNA-queuosine biosynthesis. Its function is as follows. Catalyzes the NADPH-dependent reduction of 7-cyano-7-deazaguanine (preQ0) to 7-aminomethyl-7-deazaguanine (preQ1). The protein is NADPH-dependent 7-cyano-7-deazaguanine reductase of Pseudomonas fluorescens (strain Pf0-1).